The chain runs to 130 residues: Small ribosomal subunit protein uS8A (130 aa).

It belongs to the universal ribosomal protein uS8 family. As to quaternary structure, component of the small ribosomal subunit (SSU). Mature yeast ribosomes consist of a small (40S) and a large (60S) subunit. The 40S small subunit contains 1 molecule of ribosomal RNA (18S rRNA) and 33 different proteins (encoded by 57 genes). The large 60S subunit contains 3 rRNA molecules (25S, 5.8S and 5S rRNA) and 46 different proteins (encoded by 81 genes).

The protein resides in the cytoplasm. Component of the ribosome, a large ribonucleoprotein complex responsible for the synthesis of proteins in the cell. The small ribosomal subunit (SSU) binds messenger RNAs (mRNAs) and translates the encoded message by selecting cognate aminoacyl-transfer RNA (tRNA) molecules. The large subunit (LSU) contains the ribosomal catalytic site termed the peptidyl transferase center (PTC), which catalyzes the formation of peptide bonds, thereby polymerizing the amino acids delivered by tRNAs into a polypeptide chain. The nascent polypeptides leave the ribosome through a tunnel in the LSU and interact with protein factors that function in enzymatic processing, targeting, and the membrane insertion of nascent chains at the exit of the ribosomal tunnel. In Saccharomyces cerevisiae (strain ATCC 204508 / S288c) (Baker's yeast), this protein is Small ribosomal subunit protein uS8A.